A 589-amino-acid polypeptide reads, in one-letter code: Aspartate--tRNA ligase 2 (589 aa).

E174 is a binding site for L-aspartate. The interval 198–201 (QITK) is aspartate. R220 contributes to the L-aspartate binding site. ATP-binding positions include 220-222 (RDE) and Q229. Position 443 (H443) interacts with L-aspartate. E477 serves as a coordination point for ATP. Residue R484 coordinates L-aspartate. Position 529–532 (529–532 (GLDR)) interacts with ATP.

Belongs to the class-II aminoacyl-tRNA synthetase family. Type 1 subfamily. As to quaternary structure, homodimer.

It localises to the cytoplasm. The catalysed reaction is tRNA(Asp) + L-aspartate + ATP = L-aspartyl-tRNA(Asp) + AMP + diphosphate. In terms of biological role, catalyzes the attachment of L-aspartate to tRNA(Asp) in a two-step reaction: L-aspartate is first activated by ATP to form Asp-AMP and then transferred to the acceptor end of tRNA(Asp). The polypeptide is Aspartate--tRNA ligase 2 (Streptococcus mutans serotype c (strain ATCC 700610 / UA159)).